Here is a 74-residue protein sequence, read N- to C-terminus: UPF0346 protein LCA_0996 (74 aa).

The protein belongs to the UPF0346 family.

The sequence is that of UPF0346 protein LCA_0996 from Latilactobacillus sakei subsp. sakei (strain 23K) (Lactobacillus sakei subsp. sakei).